A 365-amino-acid chain; its full sequence is 3-isopropylmalate dehydrogenase (365 aa).

78–89 (GPKWGTGKVRPE) serves as a coordination point for NAD(+). Positions 96, 106, 135, and 224 each coordinate substrate. Mg(2+) is bound by residues Asp-224, Asp-249, and Asp-253. NAD(+) is bound at residue 289 to 301 (GSAPDISGKGIVN).

The protein belongs to the isocitrate and isopropylmalate dehydrogenases family. As to quaternary structure, homodimer. It depends on Mg(2+) as a cofactor. The cofactor is Mn(2+).

It localises to the cytoplasm. It catalyses the reaction (2R,3S)-3-isopropylmalate + NAD(+) = 4-methyl-2-oxopentanoate + CO2 + NADH. It functions in the pathway amino-acid biosynthesis; L-leucine biosynthesis; L-leucine from 3-methyl-2-oxobutanoate: step 3/4. In terms of biological role, catalyzes the oxidation of 3-carboxy-2-hydroxy-4-methylpentanoate (3-isopropylmalate) to 3-carboxy-4-methyl-2-oxopentanoate. The product decarboxylates to 4-methyl-2 oxopentanoate. The sequence is that of 3-isopropylmalate dehydrogenase (LEUC) from Zymoseptoria tritici (Speckled leaf blotch fungus).